A 584-amino-acid chain; its full sequence is 2-succinyl-5-enolpyruvyl-6-hydroxy-3-cyclohexene-1-carboxylate synthase (584 aa).

This sequence belongs to the TPP enzyme family. MenD subfamily. Homodimer. Mg(2+) serves as cofactor. Mn(2+) is required as a cofactor. Requires thiamine diphosphate as cofactor.

The enzyme catalyses isochorismate + 2-oxoglutarate + H(+) = 5-enolpyruvoyl-6-hydroxy-2-succinyl-cyclohex-3-ene-1-carboxylate + CO2. It participates in quinol/quinone metabolism; 1,4-dihydroxy-2-naphthoate biosynthesis; 1,4-dihydroxy-2-naphthoate from chorismate: step 2/7. The protein operates within quinol/quinone metabolism; menaquinone biosynthesis. Catalyzes the thiamine diphosphate-dependent decarboxylation of 2-oxoglutarate and the subsequent addition of the resulting succinic semialdehyde-thiamine pyrophosphate anion to isochorismate to yield 2-succinyl-5-enolpyruvyl-6-hydroxy-3-cyclohexene-1-carboxylate (SEPHCHC). The sequence is that of 2-succinyl-5-enolpyruvyl-6-hydroxy-3-cyclohexene-1-carboxylate synthase from Bacillus cytotoxicus (strain DSM 22905 / CIP 110041 / 391-98 / NVH 391-98).